Here is a 308-residue protein sequence, read N- to C-terminus: Ribosomal RNA small subunit methyltransferase H (308 aa).

Residues 36–38 (GGH), aspartate 55, phenylalanine 86, aspartate 103, and glutamine 110 each bind S-adenosyl-L-methionine.

This sequence belongs to the methyltransferase superfamily. RsmH family.

It is found in the cytoplasm. It carries out the reaction cytidine(1402) in 16S rRNA + S-adenosyl-L-methionine = N(4)-methylcytidine(1402) in 16S rRNA + S-adenosyl-L-homocysteine + H(+). In terms of biological role, specifically methylates the N4 position of cytidine in position 1402 (C1402) of 16S rRNA. The chain is Ribosomal RNA small subunit methyltransferase H from Helicobacter pylori (strain Shi470).